A 557-amino-acid chain; its full sequence is Calcium-dependent protein kinase 4 (557 aa).

The tract at residues 1–72 is disordered; it reads MGNTCRGSIG…LVSPRKASMN (72 aa). Gly2 carries the N-myristoyl glycine lipid modification. Residues 15 to 27 are compositionally biased toward polar residues; that stretch reads QGYTQPEDSSCST. Low complexity predominate over residues 28 to 48; sequence NHNPSSGNSYSSSDNFSPTSN. The 259-residue stretch at 94–352 folds into the Protein kinase domain; that stretch reads YTLGRKLGQG…AHEVLCHPWI (259 aa). Residues 100-108 and Lys123 each bind ATP; that span reads LGQGQFGTT. The active-site Proton acceptor is Asp218. Residues 358-388 are autoinhibitory domain; that stretch reads APDRALDPAVLSRLKQFSAMNKLKKMALRVI. EF-hand domains lie at 395–430, 431–466, 467–502, and 506–536; these read EEIA…YGST, LKDT…LNKL, EREE…HNMT, and FEDI…GNPC. Residues Asp408, Asp410, Ser412, Glu419, Asp444, Asp446, Ser448, Thr450, Glu455, Asp480, Asp482, Ser484, Tyr486, Glu491, Asp514, Asp516, Asp518, Arg520, and Glu525 each contribute to the Ca(2+) site.

The protein belongs to the protein kinase superfamily. Ser/Thr protein kinase family. CDPK subfamily.

It localises to the membrane. It catalyses the reaction L-seryl-[protein] + ATP = O-phospho-L-seryl-[protein] + ADP + H(+). The catalysed reaction is L-threonyl-[protein] + ATP = O-phospho-L-threonyl-[protein] + ADP + H(+). Its activity is regulated as follows. Activated by calcium. Autophosphorylation may play an important role in the regulation of the kinase activity. In terms of biological role, regulates the production of reactive oxygen species (ROS) by NADPH oxidase. The protein is Calcium-dependent protein kinase 4 (CPK4) of Solanum tuberosum (Potato).